A 592-amino-acid chain; its full sequence is Imidazole glycerol phosphate synthase hisHF, chloroplastic (592 aa).

The N-terminal 55 residues, 1–55 (MEATAAPFSSIVSSRQNFSSSSSIRASSPASLFLSQKSIGNVNRKFKSPRSLSVR), are a transit peptide targeting the chloroplast. The Glutamine amidotransferase type-1 domain maps to 63–271 (VVTLLDYGAG…LHPKLPATQK (209 aa)). Residues C141, H246, and E248 each act as for GATase activity in the active site. The segment at 280–592 (LAKRVIACLD…LQEERIEVRI (313 aa)) is cyclase. Active-site residues include D289 and D447.

It in the C-terminal section; belongs to the HisA/HisF family.

The protein localises to the plastid. The protein resides in the chloroplast. It catalyses the reaction 5-[(5-phospho-1-deoxy-D-ribulos-1-ylimino)methylamino]-1-(5-phospho-beta-D-ribosyl)imidazole-4-carboxamide + L-glutamine = D-erythro-1-(imidazol-4-yl)glycerol 3-phosphate + 5-amino-1-(5-phospho-beta-D-ribosyl)imidazole-4-carboxamide + L-glutamate + H(+). The catalysed reaction is L-glutamine + H2O = L-glutamate + NH4(+). It participates in amino-acid biosynthesis; L-histidine biosynthesis; L-histidine from 5-phospho-alpha-D-ribose 1-diphosphate: step 5/9. Its function is as follows. IGPS catalyzes the conversion of PRFAR and glutamine to IGP, AICAR and glutamate. The glutaminase domain produces the ammonia necessary for the cyclase domain to produce IGP and AICAR from PRFAR. The ammonia is channeled to the active site of the cyclase domain. The protein is Imidazole glycerol phosphate synthase hisHF, chloroplastic (HISN4) of Arabidopsis thaliana (Mouse-ear cress).